A 94-amino-acid chain; its full sequence is Beta-diguetoxin-Dc1a (94 aa).

The N-terminal stretch at 1–17 (MKVFVVLLCLSLAAVYA) is a signal peptide. Residues 18 to 38 (LEERLDKDADIMLDSPADMER) constitute a propeptide that is removed on maturation. 4 disulfide bridges follow: Cys50-Cys63, Cys57-Cys77, Cys62-Cys91, and Cys79-Cys89.

This sequence belongs to the neurotoxin 26 (DTX) family. In terms of tissue distribution, expressed by the venom gland.

The protein localises to the secreted. Functionally, insecticidal toxin. This toxin promotes opening of insect Nav channels. The toxin binds to the S1-S2 and S3-S4 loops in the domain II voltage-sensor of insect Nav channels (i.e., receptor site 4). The American cockroach P.americana is largely resistant to the effects of this toxin due to an unusual sequence within the domain II S1-S2 loop. In vivo, paralyzes lepidopteran and dipteran larvae. Paralyzed insects ultimately die from secondary effects of starvation and dehydration. The chain is Beta-diguetoxin-Dc1a from Diguetia canities (Desert bush spider).